Reading from the N-terminus, the 245-residue chain is 14-3-3 protein theta (245 aa).

At Met1 the chain carries N-acetylmethionine. An N6-acetyllysine modification is found at Lys3. An N6-acetyllysine; alternate modification is found at Lys49. A Glycyl lysine isopeptide (Lys-Gly) (interchain with G-Cter in SUMO2); alternate cross-link involves residue Lys49. The residue at position 68 (Lys68) is an N6-acetyllysine. Tyr82 carries the post-translational modification 3'-nitrotyrosine. A Phosphoserine modification is found at Ser92. Tyr104 bears the 3'-nitrotyrosine mark. At Lys115 the chain carries N6-acetyllysine. Ser232 is modified (phosphoserine; by CK1).

This sequence belongs to the 14-3-3 family. As to quaternary structure, homodimer. Interacts with CDKN1B ('Thr-198' phosphorylated form); the interaction translocates CDKN1B to the cytoplasm. Interacts with SSH1. Interacts with GAB2. Interacts with RGS7 (phosphorylated form). Interacts with CDK16. Interacts with the 'Ser-241' phosphorylated form of PDPK1. Interacts with the 'Thr-369' phosphorylated form of DAPK2. Interacts with PI4KB, TBC1D22A and TBC1D22B. Interacts with SLITRK1. Interacts with RIPOR2. Interacts with INAVA; the interaction increases upon PRR (pattern recognition receptor) stimulation and is required for cellular signaling pathway activation and cytokine secretion. Interacts with MARK2, MARK3 and MARK4. Interacts with MEFV.

It localises to the cytoplasm. Adapter protein implicated in the regulation of a large spectrum of both general and specialized signaling pathways. Binds to a large number of partners, usually by recognition of a phosphoserine or phosphothreonine motif. Binding generally results in the modulation of the activity of the binding partner. Negatively regulates the kinase activity of PDPK1. This is 14-3-3 protein theta (Ywhaq) from Mus musculus (Mouse).